The following is a 459-amino-acid chain: DNA-binding protein P3A2 (459 aa).

The disordered stretch occupies residues 1–25; the sequence is MMISEDISEPSSPDTPFDDSDLLNS.

It belongs to the NRF1/Ewg family.

The protein resides in the nucleus. Its function is as follows. Transcriptional regulator that interacts with specific sites in the control region of the cyIIIa actin gene. Also binds specifically to similar target sites located in the regulatory region of the SM50 gene. This Strongylocentrotus purpuratus (Purple sea urchin) protein is DNA-binding protein P3A2.